We begin with the raw amino-acid sequence, 500 residues long: Lysine--tRNA ligase (500 aa).

Positions 406 and 413 each coordinate Mg(2+).

This sequence belongs to the class-II aminoacyl-tRNA synthetase family. In terms of assembly, homodimer. The cofactor is Mg(2+).

The protein localises to the cytoplasm. The catalysed reaction is tRNA(Lys) + L-lysine + ATP = L-lysyl-tRNA(Lys) + AMP + diphosphate. In Sulfolobus acidocaldarius (strain ATCC 33909 / DSM 639 / JCM 8929 / NBRC 15157 / NCIMB 11770), this protein is Lysine--tRNA ligase.